Here is a 671-residue protein sequence, read N- to C-terminus: UvrABC system protein B (671 aa).

Residues 25-412 (EGIEAGLSHQ…AGRVVEQVVR (388 aa)) enclose the Helicase ATP-binding domain. 38 to 45 (GVTGSGKT) contacts ATP. The Beta-hairpin motif lies at 91-114 (YYDYYQPEAYVPSSDTFIEKDASI). The 154-residue stretch at 429–582 (QVDDLLSEIR…QIAFNEANGI (154 aa)) folds into the Helicase C-terminal domain. Residues 632-667 (TKRIKQLEEKMMQFARDLEFEAAAQLRDEIAQLRER) enclose the UVR domain.

The protein belongs to the UvrB family. In terms of assembly, forms a heterotetramer with UvrA during the search for lesions. Interacts with UvrC in an incision complex.

The protein resides in the cytoplasm. The UvrABC repair system catalyzes the recognition and processing of DNA lesions. A damage recognition complex composed of 2 UvrA and 2 UvrB subunits scans DNA for abnormalities. Upon binding of the UvrA(2)B(2) complex to a putative damaged site, the DNA wraps around one UvrB monomer. DNA wrap is dependent on ATP binding by UvrB and probably causes local melting of the DNA helix, facilitating insertion of UvrB beta-hairpin between the DNA strands. Then UvrB probes one DNA strand for the presence of a lesion. If a lesion is found the UvrA subunits dissociate and the UvrB-DNA preincision complex is formed. This complex is subsequently bound by UvrC and the second UvrB is released. If no lesion is found, the DNA wraps around the other UvrB subunit that will check the other stand for damage. The chain is UvrABC system protein B from Pseudomonas putida (strain ATCC 47054 / DSM 6125 / CFBP 8728 / NCIMB 11950 / KT2440).